The primary structure comprises 677 residues: Forkhead box protein P1 (677 aa).

The segment covering 1–18 has biased composition (polar residues); it reads MMQESGTETKSNGSAIQN. The segment at 1–43 is disordered; it reads MMQESGTETKSNGSAIQNGSGGSNHLLECGGLREGRSNGETPA. Residue S83 is modified to Phosphoserine. A compositionally biased stretch (polar residues) spans 270–283; that stretch reads IMNPHASTNGQLSV. The interval 270-298 is disordered; the sequence is IMNPHASTNGQLSVHTPKRESLSHEEHPH. Residues 286 to 298 show a composition bias toward basic and acidic residues; sequence PKRESLSHEEHPH. K287 is covalently cross-linked (Glycyl lysine isopeptide (Lys-Gly) (interchain with G-Cter in SUMO2)). Residues 306 to 331 form a C2H2-type zinc finger; sequence GVCKWPGCEAVCEDFQSFLKHLNSEH. The leucine-zipper stretch occupies residues 348–369; the sequence is VQQLELQLAKDKERLQAMMTHL. Glycyl lysine isopeptide (Lys-Gly) (interchain with G-Cter in SUMO2) cross-links involve residues K372 and K377. Residues 382–386 are CTBP1-binding; the sequence is PLNLV. A compositionally biased stretch (polar residues) spans 390–403; sequence TLSKSASEASPQSL. The segment at 390–422 is disordered; it reads TLSKSASEASPQSLPHTPTTPTAPLTPVTQGPS. Low complexity predominate over residues 404–418; it reads PHTPTTPTAPLTPVT. K442 is covalently cross-linked (Glycyl lysine isopeptide (Lys-Gly) (interchain with G-Cter in SUMO2)). The segment at residues 465–555 is a DNA-binding region (fork-head); that stretch reads RPPFTYASLI…PQKISGNPSL (91 aa). The segment at 611 to 677 is disordered; that stretch reads EHTNSNESDS…EDEPVNEDME (67 aa). Residues 612 to 623 show a composition bias toward polar residues; that stretch reads HTNSNESDSSPG. The residue at position 653 (T653) is a Phosphothreonine. At S658 the chain carries Phosphoserine. The segment covering 667–677 has biased composition (acidic residues); the sequence is YEDEPVNEDME.

As to quaternary structure, forms homodimers and heterodimers with FOXP2 and FOXP4. Dimerization is required for DNA-binding. Self-associates. Interacts with CTBP1. Interacts with NCOR2 and AR. Interacts with FOXP2. Interacts with TBR1. Interacts with AURKA; this interaction facilitates the phosphorylation of FOXP1, which suppresses the expression of FBXL7. Interacts with ZMYM2. Isoform 8 is specifically expressed in embryonic stem cells.

The protein localises to the nucleus. In terms of biological role, transcriptional repressor. Can act with CTBP1 to synergistically repress transcription but CTPBP1 is not essential. Plays an important role in the specification and differentiation of lung epithelium. Acts cooperatively with FOXP4 to regulate lung secretory epithelial cell fate and regeneration by restricting the goblet cell lineage program; the function may involve regulation of AGR2. Essential transcriptional regulator of B-cell development. Involved in regulation of cardiac muscle cell proliferation. Involved in the columnar organization of spinal motor neurons. Promotes the formation of the lateral motor neuron column (LMC) and the preganglionic motor column (PGC) and is required for respective appropriate motor axon projections. The segment-appropriate generation of spinal cord motor columns requires cooperation with other Hox proteins. Can regulate PITX3 promoter activity; may promote midbrain identity in embryonic stem cell-derived dopamine neurons by regulating PITX3. Negatively regulates the differentiation of T follicular helper cells T(FH)s. Involved in maintenance of hair follicle stem cell quiescence; the function probably involves regulation of FGF18. Represses transcription of various pro-apoptotic genes and cooperates with NF-kappa B-signaling in promoting B-cell expansion by inhibition of caspase-dependent apoptosis. Binds to CSF1R promoter elements and is involved in regulation of monocyte differentiation and macrophage functions; repression of CSF1R in monocytes seems to involve NCOR2 as corepressor. Involved in endothelial cell proliferation, tube formation and migration indicative for a role in angiogenesis; the role in neovascularization seems to implicate suppression of SEMA5B. Can negatively regulate androgen receptor signaling. Acts as a transcriptional activator of the FBXL7 promoter; this activity is regulated by AURKA. Its function is as follows. Involved in transcriptional regulation in embryonic stem cells (ESCs). Stimulates expression of transcription factors that are required for pluripotency and decreases expression of differentiation-associated genes. Has distinct DNA-binding specifities as compared to the canonical form and preferentially binds DNA with the sequence 5'-CGATACAA-3' (or closely related sequences). Promotes ESC self-renewal and pluripotency. In Homo sapiens (Human), this protein is Forkhead box protein P1 (FOXP1).